The chain runs to 687 residues: Pentatricopeptide repeat-containing protein At3g09060 (687 aa).

18 PPR repeats span residues 42–76 (SAVV…ECKC), 77–107 (DEDV…MREI), 113–147 (AIRS…GVAP), 148–182 (NLQT…GFKP), 183–217 (DVFS…GVAP), 218–253 (DVTC…SVYP), 254–288 (NVKT…EREK), 289–323 (DLYT…KASI), 324–358 (DVVT…NSVN), 359–392 (IVSY…GYAA), 393–427 (DKTT…GGHL), 428–462 (DVYA…GVEL), 463–497 (NSHV…GCRP), 498–532 (TVVS…GWKP), 533–567 (DLKT…GLET), 568–602 (DVMM…NCTA), 603–637 (NLVT…GLQP), and 638–672 (DIIS…GIFP).

This sequence belongs to the PPR family. P subfamily.

The protein is Pentatricopeptide repeat-containing protein At3g09060 of Arabidopsis thaliana (Mouse-ear cress).